Here is a 71-residue protein sequence, read N- to C-terminus: Conotoxin Pl071 (71 aa).

The signal sequence occupies residues 1–20; it reads MSRLFMILLVICVITLGTDA. The propeptide occupies 21–31; that stretch reads SQAEDSGTEKR. Tyr69 carries the tyrosine amide modification.

It belongs to the conotoxin NSf-1 superfamily. Expressed by the venom duct.

It localises to the secreted. Its function is as follows. Probable neurotoxin with unknown target. Possibly targets ion channels. The chain is Conotoxin Pl071 from Conus planorbis (Planorbis cone).